Consider the following 36-residue polypeptide: uncharacterized protein (36 aa).

This is an uncharacterized protein from Enterobacteria phage T4 (Bacteriophage T4).